The sequence spans 384 residues: MAKVDFYEVLGVSKGASAEEIKKAYRSKAKELHPDRNQGQSAAEAQFKEVNGAYDVLKDGDKKAAYDRYGHAAFEGGMGGGGPRGPYGQGADFSSAFSDVFEDLFGDFMGGRGGPGGGGRRVRRRGSDLRYNMRVTLEEAFKGAQKTITVPGSAACGSCNGTGAEGGAEPQTCPTCSGLGKVRAQNGFFTVERTCPTCGGQGQVVKNPCRVCHGSGRIEKERTLSVNIPAGVETGTRIRLAGEGEAGMRGGPSGDLYIFIEVREHAIFQRDGVNLFCRVPVSMVSAALGGEVEVPTIDGGRSKVKVPVGSQSGRQMRLRGKGMPALRGGGIGDMVIELAVETPVNLTARQKELLDEFQRIQAENNPEGASFFQKVKSFWDGMKG.

The J domain occupies 5–70 (DFYEVLGVSK…DKKAAYDRYG (66 aa)). Residues 143–221 (GAQKTITVPG…CHGSGRIEKE (79 aa)) form a CR-type zinc finger. Zn(2+) contacts are provided by cysteine 156, cysteine 159, cysteine 173, cysteine 176, cysteine 195, cysteine 198, cysteine 209, and cysteine 212. 4 CXXCXGXG motif repeats span residues 156-163 (CGSCNGTG), 173-180 (CPTCSGLG), 195-202 (CPTCGGQG), and 209-216 (CRVCHGSG).

It belongs to the DnaJ family. Homodimer. The cofactor is Zn(2+).

It localises to the cytoplasm. In terms of biological role, participates actively in the response to hyperosmotic and heat shock by preventing the aggregation of stress-denatured proteins and by disaggregating proteins, also in an autonomous, DnaK-independent fashion. Unfolded proteins bind initially to DnaJ; upon interaction with the DnaJ-bound protein, DnaK hydrolyzes its bound ATP, resulting in the formation of a stable complex. GrpE releases ADP from DnaK; ATP binding to DnaK triggers the release of the substrate protein, thus completing the reaction cycle. Several rounds of ATP-dependent interactions between DnaJ, DnaK and GrpE are required for fully efficient folding. Also involved, together with DnaK and GrpE, in the DNA replication of plasmids through activation of initiation proteins. The sequence is that of Chaperone protein DnaJ from Rhodobacter capsulatus (Rhodopseudomonas capsulata).